The primary structure comprises 295 residues: HTH-type transcriptional regulator TrpI (295 aa).

Residues 6-63 (PSLNALRAFEAAARLHSISLAAEELHVTHGAVSRQVRLLEDDLGVALFGKDGRGVKLT) enclose the HTH lysR-type domain. A DNA-binding region (H-T-H motif) is located at residues 23–42 (ISLAAEELHVTHGAVSRQVR).

Belongs to the LysR transcriptional regulatory family. As to quaternary structure, homotetramer.

In terms of biological role, activates the expression of the trpBA genes, which encode the two tryptophan synthase subunits, and represses initiation at its own promoter. Acts by binding to two adjacent sites in the intergenic region. In the absence of the inducer indoleglycerol phosphate (InGP), TrpI binds to site I. In the presence of InGP, TrpI binds to site I and site II. Binding to site II is site I dependent. InGP strongly stimulates binding to site II and is required for maximal activation of trpBA. This chain is HTH-type transcriptional regulator TrpI, found in Pseudomonas aeruginosa (strain ATCC 15692 / DSM 22644 / CIP 104116 / JCM 14847 / LMG 12228 / 1C / PRS 101 / PAO1).